The sequence spans 1025 residues: Beta-galactosidase (1025 aa).

Catalysis depends on E482, which acts as the Proton donor. The active-site Nucleophile is E551.

Belongs to the glycosyl hydrolase 2 family.

It carries out the reaction Hydrolysis of terminal non-reducing beta-D-galactose residues in beta-D-galactosides.. The chain is Beta-galactosidase (LAC4) from Kluyveromyces lactis (strain ATCC 8585 / CBS 2359 / DSM 70799 / NBRC 1267 / NRRL Y-1140 / WM37) (Yeast).